The chain runs to 180 residues: Adenine phosphoribosyltransferase (180 aa).

The protein belongs to the purine/pyrimidine phosphoribosyltransferase family. As to quaternary structure, homodimer.

It is found in the cytoplasm. The catalysed reaction is AMP + diphosphate = 5-phospho-alpha-D-ribose 1-diphosphate + adenine. Its pathway is purine metabolism; AMP biosynthesis via salvage pathway; AMP from adenine: step 1/1. Functionally, catalyzes a salvage reaction resulting in the formation of AMP, that is energically less costly than de novo synthesis. In Mycolicibacterium paratuberculosis (strain ATCC BAA-968 / K-10) (Mycobacterium paratuberculosis), this protein is Adenine phosphoribosyltransferase.